A 147-amino-acid polypeptide reads, in one-letter code: MQKQARKQITLYSDGSSLGNPGPGGYGGILEYKGSRKEYFGGEEETTNNRMELRGVIEGLKLLKEPCDVEVVSDSSYVVKAINEWLESWIRRDFKKVKNVDLWKAYIEAAAPHHVHGTWVRGHDGHPENERCDELARNEAERIKASL.

An RNase H type-1 domain is found at 5–141; that stretch reads ARKQITLYSD…CDELARNEAE (137 aa). Residues Asp14, Glu52, Asp74, and Asp133 each coordinate Mg(2+).

It belongs to the RNase H family. Monomer. Mg(2+) serves as cofactor.

It is found in the cytoplasm. The enzyme catalyses Endonucleolytic cleavage to 5'-phosphomonoester.. Endonuclease that specifically degrades the RNA of RNA-DNA hybrids. The sequence is that of Ribonuclease H from Sulfurovum sp. (strain NBC37-1).